Here is a 315-residue protein sequence, read N- to C-terminus: Diacylglycerol kinase (315 aa).

One can recognise a DAGKc domain in the interval Met-1–Tyr-132. ATP is bound by residues Asn-10–Gly-14, Thr-41, Gly-67–Glu-73, and Thr-94. 3 residues coordinate Mg(2+): Lys-213, Asp-216, and Tyr-218. The Proton acceptor role is filled by Glu-273.

This sequence belongs to the diacylglycerol/lipid kinase family. As to quaternary structure, homodimer. Mg(2+) is required as a cofactor.

The enzyme catalyses a 1,2-diacyl-sn-glycerol + ATP = a 1,2-diacyl-sn-glycero-3-phosphate + ADP + H(+). Catalyzes the phosphorylation of diacylglycerol (DAG) into phosphatidic acid. Is a key enzyme involved in the production of lipoteichoic acid by reintroducing DAG formed from the breakdown of membrane phospholipids into the phosphatidylglycerol biosynthetic pathway. This Staphylococcus aureus (strain MRSA252) protein is Diacylglycerol kinase (dagK).